The primary structure comprises 124 residues: Small ribosomal subunit protein uS12 (124 aa).

The interval 1-28 is disordered; it reads MPTIQQLIRSERSKAKKKTKSPALKQCP. At aspartate 89 the chain carries 3-methylthioaspartic acid. The segment at 101-124 is disordered; it reads TLDAQGVKDRKQGRSKYGTKKPKE. Basic residues predominate over residues 113–124; sequence GRSKYGTKKPKE.

Belongs to the universal ribosomal protein uS12 family. Part of the 30S ribosomal subunit. Contacts proteins S8 and S17. May interact with IF1 in the 30S initiation complex.

In terms of biological role, with S4 and S5 plays an important role in translational accuracy. Its function is as follows. Interacts with and stabilizes bases of the 16S rRNA that are involved in tRNA selection in the A site and with the mRNA backbone. Located at the interface of the 30S and 50S subunits, it traverses the body of the 30S subunit contacting proteins on the other side and probably holding the rRNA structure together. The combined cluster of proteins S8, S12 and S17 appears to hold together the shoulder and platform of the 30S subunit. The sequence is that of Small ribosomal subunit protein uS12 from Crocosphaera subtropica (strain ATCC 51142 / BH68) (Cyanothece sp. (strain ATCC 51142)).